Consider the following 499-residue polypeptide: Glycerol kinase (499 aa).

Residue Thr13 coordinates ADP. ATP-binding residues include Thr13, Thr14, and Ser15. Sn-glycerol 3-phosphate is bound at residue Thr13. Arg17 lines the ADP pocket. 4 residues coordinate sn-glycerol 3-phosphate: Arg83, Glu84, Tyr135, and Asp244. Arg83, Glu84, Tyr135, Asp244, and Gln245 together coordinate glycerol. ADP is bound by residues Thr266 and Gly310. ATP-binding residues include Thr266, Gly310, Gln314, and Gly411. The ADP site is built by Gly411 and Asn415.

Belongs to the FGGY kinase family.

The enzyme catalyses glycerol + ATP = sn-glycerol 3-phosphate + ADP + H(+). The protein operates within polyol metabolism; glycerol degradation via glycerol kinase pathway; sn-glycerol 3-phosphate from glycerol: step 1/1. Its activity is regulated as follows. Inhibited by fructose 1,6-bisphosphate (FBP). In terms of biological role, key enzyme in the regulation of glycerol uptake and metabolism. Catalyzes the phosphorylation of glycerol to yield sn-glycerol 3-phosphate. The protein is Glycerol kinase of Pseudothermotoga lettingae (strain ATCC BAA-301 / DSM 14385 / NBRC 107922 / TMO) (Thermotoga lettingae).